Reading from the N-terminus, the 180-residue chain is Inner membrane-spanning protein YciB (180 aa).

Transmembrane regions (helical) follow at residues 25 to 45 (QNAT…CYII), 49 to 69 (VSKL…ITLI), 76 to 96 (IKIK…MSGI), 118 to 138 (ITLS…NEIV), and 150 to 170 (FKVF…LPLL).

It belongs to the YciB family.

Its subcellular location is the cell inner membrane. Functionally, plays a role in cell envelope biogenesis, maintenance of cell envelope integrity and membrane homeostasis. This is Inner membrane-spanning protein YciB from Rickettsia akari (strain Hartford).